The sequence spans 308 residues: Probable manganese-dependent inorganic pyrophosphatase (308 aa).

6 residues coordinate Mn(2+): His9, Asp13, Asp15, Asp75, His97, and Asp149.

The protein belongs to the PPase class C family. The cofactor is Mn(2+).

It localises to the cytoplasm. The catalysed reaction is diphosphate + H2O = 2 phosphate + H(+). The polypeptide is Probable manganese-dependent inorganic pyrophosphatase (Listeria welshimeri serovar 6b (strain ATCC 35897 / DSM 20650 / CCUG 15529 / CIP 8149 / NCTC 11857 / SLCC 5334 / V8)).